The following is a 590-amino-acid chain: Beta-fructofuranosidase, cell wall isozyme (590 aa).

The N-terminal stretch at 1-28 is a signal peptide; that stretch reads MGTRPRGVVLAPWAVVLVLVLALRLAGA. D68 is an active-site residue. N-linked (GlcNAc...) asparagine glycans are attached at residues N190 and N341.

The protein belongs to the glycosyl hydrolase 32 family.

It localises to the secreted. Its subcellular location is the cell wall. It catalyses the reaction Hydrolysis of terminal non-reducing beta-D-fructofuranoside residues in beta-D-fructofuranosides.. This is Beta-fructofuranosidase, cell wall isozyme from Zea mays (Maize).